A 373-amino-acid polypeptide reads, in one-letter code: Phosphoserine aminotransferase (373 aa).

An L-glutamate-binding site is contributed by Arg-41. Pyridoxal 5'-phosphate is bound by residues 75 to 76 (GT), Trp-101, Thr-152, Asp-172, and Gln-195. An N6-(pyridoxal phosphate)lysine modification is found at Lys-196. A pyridoxal 5'-phosphate-binding site is contributed by 236 to 237 (NT).

It belongs to the class-V pyridoxal-phosphate-dependent aminotransferase family. SerC subfamily. Homodimer. Pyridoxal 5'-phosphate serves as cofactor.

The protein localises to the cytoplasm. It carries out the reaction O-phospho-L-serine + 2-oxoglutarate = 3-phosphooxypyruvate + L-glutamate. The catalysed reaction is 4-(phosphooxy)-L-threonine + 2-oxoglutarate = (R)-3-hydroxy-2-oxo-4-phosphooxybutanoate + L-glutamate. Its pathway is amino-acid biosynthesis; L-serine biosynthesis; L-serine from 3-phospho-D-glycerate: step 2/3. Its function is as follows. Catalyzes the reversible conversion of 3-phosphohydroxypyruvate to phosphoserine and of 3-hydroxy-2-oxo-4-phosphonooxybutanoate to phosphohydroxythreonine. The sequence is that of Phosphoserine aminotransferase from Lactobacillus helveticus (strain DPC 4571).